We begin with the raw amino-acid sequence, 201 residues long: Peptide deformylase (201 aa).

The Fe cation site is built by C114 and H156. Residue E157 is part of the active site. Residue H160 coordinates Fe cation.

It belongs to the polypeptide deformylase family. Requires Fe(2+) as cofactor.

The catalysed reaction is N-terminal N-formyl-L-methionyl-[peptide] + H2O = N-terminal L-methionyl-[peptide] + formate. In terms of biological role, removes the formyl group from the N-terminal Met of newly synthesized proteins. Requires at least a dipeptide for an efficient rate of reaction. N-terminal L-methionine is a prerequisite for activity but the enzyme has broad specificity at other positions. In Tropheryma whipplei (strain TW08/27) (Whipple's bacillus), this protein is Peptide deformylase.